A 159-amino-acid polypeptide reads, in one-letter code: uncharacterized protein (159 aa).

4 consecutive transmembrane segments (helical) span residues 5–27 (TLDL…RGFV), 34–51 (ASIL…KRLV), 61–83 (SILL…MLFL), and 103–125 (FGFF…LLHV).

It localises to the cell membrane. This is an uncharacterized protein from Treponema pallidum (strain Nichols).